Consider the following 101-residue polypeptide: Ubiquitin-related modifier 1 homolog (101 aa).

Glycine 101 is subject to 1-thioglycine. Glycine 101 participates in a covalent cross-link: Glycyl lysine isopeptide (Gly-Lys) (interchain with K-? in acceptor proteins).

Belongs to the URM1 family. Interacts with cer. C-terminal thiocarboxylation occurs in 2 steps, it is first acyl-adenylated (-COAMP) via the hesA/moeB/thiF part of the MOCS3 homolog, then thiocarboxylated (-COSH) via the rhodanese domain of the MOCS3 homolog.

The protein localises to the cytoplasm. The protein operates within tRNA modification; 5-methoxycarbonylmethyl-2-thiouridine-tRNA biosynthesis. In terms of biological role, acts as a sulfur carrier required for 2-thiolation of mcm(5)S(2)U at tRNA wobble positions of cytosolic tRNA(Lys), tRNA(Glu) and tRNA(Gln). Serves as sulfur donor in tRNA 2-thiolation reaction by being thiocarboxylated (-COSH) at its C-terminus by MOCS3. The sulfur is then transferred to tRNA to form 2-thiolation of mcm(5)S(2)U. Also acts as a ubiquitin-like protein (UBL) that is covalently conjugated via an isopeptide bond to lysine residues of target proteins such as Prx2/Jafrac1, Ciao1, Eip71CD and GILT1. The thiocarboxylated form serves as substrate for conjugation and oxidative stress specifically induces the formation of UBL-protein conjugates. In Drosophila yakuba (Fruit fly), this protein is Ubiquitin-related modifier 1 homolog.